The chain runs to 556 residues: Probable glucomannan 4-beta-mannosyltransferase 3 (556 aa).

A helical transmembrane segment spans residues 56 to 76 (IFVFIPILKCLVTICLVMSLL). The active site involves D159. Substrate-binding residues include D218 and D220. Residue D312 is part of the active site. The next 4 membrane-spanning stretches (helical) occupy residues 391 to 411 (IVVHIFTFVFYCLILPTTVLF), 428 to 448 (ITILNAIATPRSLHLLVFWIL), 509 to 529 (LVVGLYIFFCGCYDFAYGGSY), and 530 to 550 (FYVYLFLQSCAFFVAGVGYIG).

The protein belongs to the glycosyltransferase 2 family. Plant cellulose synthase-like A subfamily.

The protein localises to the golgi apparatus membrane. It catalyses the reaction GDP-mannose + (glucomannan)n = GDP + (glucomannan)n+1.. Functionally, probable mannan synthase which consists of a 4-beta-mannosyltransferase activity on mannan using GDP-mannose. The beta-1,4-mannan product is the backbone for galactomannan synthesis by galactomannan galactosyltransferase. Galactomannan is a noncellulosic polysaccharides of plant cell wall. The protein is Probable glucomannan 4-beta-mannosyltransferase 3 of Arabidopsis thaliana (Mouse-ear cress).